The following is a 485-amino-acid chain: Aspartyl/glutamyl-tRNA(Asn/Gln) amidotransferase subunit B (485 aa).

This sequence belongs to the GatB/GatE family. GatB subfamily. Heterotrimer of A, B and C subunits.

The catalysed reaction is L-glutamyl-tRNA(Gln) + L-glutamine + ATP + H2O = L-glutaminyl-tRNA(Gln) + L-glutamate + ADP + phosphate + H(+). It catalyses the reaction L-aspartyl-tRNA(Asn) + L-glutamine + ATP + H2O = L-asparaginyl-tRNA(Asn) + L-glutamate + ADP + phosphate + 2 H(+). Allows the formation of correctly charged Asn-tRNA(Asn) or Gln-tRNA(Gln) through the transamidation of misacylated Asp-tRNA(Asn) or Glu-tRNA(Gln) in organisms which lack either or both of asparaginyl-tRNA or glutaminyl-tRNA synthetases. The reaction takes place in the presence of glutamine and ATP through an activated phospho-Asp-tRNA(Asn) or phospho-Glu-tRNA(Gln). This Anaplasma marginale (strain St. Maries) protein is Aspartyl/glutamyl-tRNA(Asn/Gln) amidotransferase subunit B.